Reading from the N-terminus, the 96-residue chain is Dynein light chain roadblock-type 2 (96 aa).

The residue at position 2 (alanine 2) is an N-acetylalanine.

Belongs to the GAMAD family. In terms of assembly, homodimer. The cytoplasmic dynein 1 complex consists of two catalytic heavy chains (HCs) and a number of non-catalytic subunits presented by intermediate chains (ICs), light intermediate chains (LICs) and light chains (LCs); the composition seems to vary in respect to the IC, LIC and LC composition. The heavy chain homodimer serves as a scaffold for the probable homodimeric assembly of the respective non-catalytic subunits. The ICs and LICs bind directly to the HC dimer and the LCs assemble on the IC dimer. Interacts with DYNC1I1 and DYNC1I2. Self-associates. Interacts with DYNLRB1. In terms of tissue distribution, high expression in heart, brain, placenta, skeletal muscle, prostate and small intestine; moderate in kidney, pancreas, spleen, testis, ovary and colon; low in lung, liver, thymus and leukocyte.

It localises to the cytoplasm. The protein localises to the cytoskeleton. In terms of biological role, acts as one of several non-catalytic accessory components of the cytoplasmic dynein 1 complex that are thought to be involved in linking dynein to cargos and to adapter proteins that regulate dynein function. Cytoplasmic dynein 1 acts as a motor for the intracellular retrograde motility of vesicles and organelles along microtubules. The polypeptide is Dynein light chain roadblock-type 2 (DYNLRB2) (Homo sapiens (Human)).